Here is an 856-residue protein sequence, read N- to C-terminus: DNA mismatch repair protein MutS (856 aa).

617-624 provides a ligand contact to ATP; sequence GPNMGGKS.

This sequence belongs to the DNA mismatch repair MutS family.

In terms of biological role, this protein is involved in the repair of mismatches in DNA. It is possible that it carries out the mismatch recognition step. This protein has a weak ATPase activity. This is DNA mismatch repair protein MutS from Psychromonas ingrahamii (strain DSM 17664 / CCUG 51855 / 37).